The following is a 414-amino-acid chain: MSLGAGPEAGFSSEELLTLRFPLHRACRDGDLPALCALLQSAPRSDLAAEDSFYGWTPIHWAAHFGKLECLMQLVRAGASVNASTTRFAQTPAHIAAFGGHPQCLNWLIQVGANINKQDYVGETPIHKAARSGSVDSISALVAHGAQIDLRNASGLTAADLAHTQGFQECAQFLLNLQNCHLNRYYSNGTLNGGHRNAGPNPFSGGTSRKRSFEDVESAGVKKARTEAYSFDGLIPMMNGGVEDDADNMHVDREFAVVSDMNSSSSILNALTNGCAMNGHLDFTAAQQLSGMDTRQEECLTLAPNGIIPGVTSPSRHRIHTSNGTEEPEKAMNNPTDMCGSLHLNGSPSSCVSNRPSWVEDPGDTLHYGHYHGFGDTAESIPELSSVVEHSNSVKVEQRYDNTVLGTMYLYHGS.

ANK repeat units follow at residues 18-47 (TLRF…RSDL), 54-83 (YGWT…SVNA), 88-117 (FAQT…NINK), 121-150 (VGET…QIDL), and 154-187 (SGLT…RYYS). Positions 310 to 332 (GVTSPSRHRIHTSNGTEEPEKAM) are disordered.

This is Ankyrin repeat domain-containing protein 10 (ANKRD10) from Gallus gallus (Chicken).